The sequence spans 281 residues: Ethylene-inducing xylanase 1 (281 aa).

A signal peptide spans 1 to 19 (MVSYKAFLITLAAVTRVLT). Asn23 carries an N-linked (GlcNAc...) asparagine glycan. The region spanning 32-220 (SGTPSSTGTS…SSGSSDITVG (189 aa)) is the GH11 domain. Catalysis depends on Glu116, which acts as the Nucleophile. Glu207 serves as the catalytic Proton donor. Positions 246–281 (TCGALYSQCGGTGFTGSQCCASGTCKYANSYYSQCL) constitute a CBM1 domain.

The protein belongs to the glycosyl hydrolase 11 (cellulase G) family.

It carries out the reaction Endohydrolysis of (1-&gt;4)-beta-D-xylosidic linkages in xylans.. The protein operates within glycan degradation; xylan degradation. Functionally, endo-1,4-beta-xylanase involved in the hydrolysis of xylan, a major structural heterogeneous polysaccharide found in plant biomass representing the second most abundant polysaccharide in the biosphere, after cellulose. May act as an elicitor of plant defense responses in certain plants but does not exhibit any cell death when transiently expressed in N.benthamiana. The sequence is that of Ethylene-inducing xylanase 1 from Botryotinia fuckeliana (strain B05.10) (Noble rot fungus).